The following is a 238-amino-acid chain: Splicing regulator RBM11 (238 aa).

An RRM domain is found at R10–G87. The tract at residues A172 to Y238 is disordered. The Bipartite nuclear localization signal signature appears at N202–R237. The span at K228–Y238 shows a compositional bias: basic residues.

As to quaternary structure, homodimer. As to expression, selectively expressed in brain, cerebellum and testis, and to a lower extent in kidney.

The protein resides in the nucleus. The protein localises to the nucleoplasm. It is found in the nucleus speckle. Its function is as follows. Tissue-specific splicing factor with potential implication in the regulation of alternative splicing during neuron and germ cell differentiation. Antagonizes SRSF1-mediated BCL-X splicing. May affect the choice of alternative 5' splice sites by binding to specific sequences in exons and antagonizing the SR protein SRSF1. In Mus musculus (Mouse), this protein is Splicing regulator RBM11 (Rbm11).